A 342-amino-acid chain; its full sequence is Phosphoribosylformylglycinamidine cyclo-ligase (342 aa).

Belongs to the AIR synthase family.

The protein localises to the cytoplasm. The enzyme catalyses 2-formamido-N(1)-(5-O-phospho-beta-D-ribosyl)acetamidine + ATP = 5-amino-1-(5-phospho-beta-D-ribosyl)imidazole + ADP + phosphate + H(+). It participates in purine metabolism; IMP biosynthesis via de novo pathway; 5-amino-1-(5-phospho-D-ribosyl)imidazole from N(2)-formyl-N(1)-(5-phospho-D-ribosyl)glycinamide: step 2/2. This is Phosphoribosylformylglycinamidine cyclo-ligase from Latilactobacillus sakei subsp. sakei (strain 23K) (Lactobacillus sakei subsp. sakei).